We begin with the raw amino-acid sequence, 469 residues long: Adenosylhomocysteinase (469 aa).

T60, D135, and E195 together coordinate substrate. An NAD(+)-binding site is contributed by 196-198 (TTT). Substrate-binding residues include K225 and D229. Residues N230, 259-264 (GYGDVG), E282, N317, 338-340 (IGH), and N383 each bind NAD(+).

It belongs to the adenosylhomocysteinase family. NAD(+) serves as cofactor.

The protein localises to the cytoplasm. It carries out the reaction S-adenosyl-L-homocysteine + H2O = L-homocysteine + adenosine. Its pathway is amino-acid biosynthesis; L-homocysteine biosynthesis; L-homocysteine from S-adenosyl-L-homocysteine: step 1/1. May play a key role in the regulation of the intracellular concentration of adenosylhomocysteine. This is Adenosylhomocysteinase from Maricaulis maris (strain MCS10) (Caulobacter maris).